We begin with the raw amino-acid sequence, 332 residues long: Biotin synthase (332 aa).

The Radical SAM core domain occupies 51-279 (YKVQLASLLS…LSRVRLSAGR (229 aa)). [4Fe-4S] cluster contacts are provided by Cys66, Cys70, and Cys73. [2Fe-2S] cluster is bound by residues Cys110, Cys142, Cys202, and Arg274.

It belongs to the radical SAM superfamily. Biotin synthase family. Homodimer. Requires [4Fe-4S] cluster as cofactor. It depends on [2Fe-2S] cluster as a cofactor.

The enzyme catalyses (4R,5S)-dethiobiotin + (sulfur carrier)-SH + 2 reduced [2Fe-2S]-[ferredoxin] + 2 S-adenosyl-L-methionine = (sulfur carrier)-H + biotin + 2 5'-deoxyadenosine + 2 L-methionine + 2 oxidized [2Fe-2S]-[ferredoxin]. Its pathway is cofactor biosynthesis; biotin biosynthesis; biotin from 7,8-diaminononanoate: step 2/2. Functionally, catalyzes the conversion of dethiobiotin (DTB) to biotin by the insertion of a sulfur atom into dethiobiotin via a radical-based mechanism. This chain is Biotin synthase, found in Prochlorococcus marinus (strain MIT 9211).